The following is a 974-amino-acid chain: ATP-dependent RNA helicase DBP7 (974 aa).

The interval 1–135 is disordered; it reads MDDNDDGLML…SSAASSSRKA (135 aa). Low complexity predominate over residues 13-24; the sequence is AAPAAGSASVSS. The segment covering 25–48 has biased composition (basic residues); sequence KRSKQTAKARFAQKRTAHQLRKQA. Low complexity-rich tracts occupy residues 67–85, 92–102, and 118–133; these read PASA…SPAA, ATSTSSAALSA, and TSRS…SSSR. The short motif at 200 to 230 is the Q motif element; that stretch reads SDFASCGLDPLLVYHLASKMNIGSNPTAIQK. In terms of domain architecture, Helicase ATP-binding spans 236–477; that stretch reads LLHPGLDRDI…GKTLVNPKII (242 aa). 249-256 is a binding site for ATP; the sequence is AQTGSGKT. Residues 381–384 carry the DEAD box motif; that stretch reads DEAD. The Helicase C-terminal domain maps to 531–747; it reads LLRSYISRAR…TRKITPASIE (217 aa). A disordered region spans residues 836–887; the sequence is KSSAIGASSTPASSHETTNKKRMRIAPDTAESDSSSDSSDDAGSDYESHSNK. A compositionally biased stretch (polar residues) spans 840 to 851; that stretch reads IGASSTPASSHE.

It belongs to the DEAD box helicase family. DDX31/DBP7 subfamily.

Its subcellular location is the nucleus. It is found in the nucleolus. The enzyme catalyses ATP + H2O = ADP + phosphate + H(+). Its function is as follows. ATP-binding RNA helicase involved in the biogenesis of 60S ribosomal subunits and is required for the normal formation of 25S and 5.8S rRNAs. This Mycosarcoma maydis (Corn smut fungus) protein is ATP-dependent RNA helicase DBP7 (DBP7).